Here is a 367-residue protein sequence, read N- to C-terminus: Histidinol-phosphate aminotransferase (367 aa).

Lysine 227 is modified (N6-(pyridoxal phosphate)lysine).

Belongs to the class-II pyridoxal-phosphate-dependent aminotransferase family. Histidinol-phosphate aminotransferase subfamily. As to quaternary structure, homodimer. Pyridoxal 5'-phosphate serves as cofactor.

It carries out the reaction L-histidinol phosphate + 2-oxoglutarate = 3-(imidazol-4-yl)-2-oxopropyl phosphate + L-glutamate. Its pathway is amino-acid biosynthesis; L-histidine biosynthesis; L-histidine from 5-phospho-alpha-D-ribose 1-diphosphate: step 7/9. This Leptospira borgpetersenii serovar Hardjo-bovis (strain JB197) protein is Histidinol-phosphate aminotransferase.